We begin with the raw amino-acid sequence, 218 residues long: Glycerol-3-phosphate acyltransferase (218 aa).

5 helical membrane passes run 4-24 (IALGMIIFAYLCGSISSAILI), 54-74 (TAAIVLICDVLKGMIPVWLAY), 80-100 (PFYLGITAIAACLGHIYPIFF), 107-127 (GVATAFGAIAAIGWDLTGLMM), and 130-150 (WLLTILLSGYSSLGAIVSALI).

The protein belongs to the PlsY family. As to quaternary structure, probably interacts with PlsX.

The protein resides in the cell inner membrane. The enzyme catalyses an acyl phosphate + sn-glycerol 3-phosphate = a 1-acyl-sn-glycero-3-phosphate + phosphate. The protein operates within lipid metabolism; phospholipid metabolism. In terms of biological role, catalyzes the transfer of an acyl group from acyl-phosphate (acyl-PO(4)) to glycerol-3-phosphate (G3P) to form lysophosphatidic acid (LPA). This enzyme utilizes acyl-phosphate as fatty acyl donor, but not acyl-CoA or acyl-ACP. The sequence is that of Glycerol-3-phosphate acyltransferase from Photorhabdus laumondii subsp. laumondii (strain DSM 15139 / CIP 105565 / TT01) (Photorhabdus luminescens subsp. laumondii).